Consider the following 1561-residue polypeptide: Rho GTPase-activating protein 190 (1561 aa).

FF domains follow at residues 252 to 320 (YQES…HMKK), 365 to 419 (YLQN…YLNS), 426 to 480 (KIGW…HQDD), and 482 to 547 (IEKS…HLRF). The region spanning 592–765 (SGSDRTLNLL…EPYPSNHTDL (174 aa)) is the pG1 pseudoGTPase domain. The 161-residue stretch at 766-926 (RILCCIFCGD…LKTAWDNKYE (161 aa)) folds into the pG2 pseudoGTPase domain. Ser-973, Ser-975, Ser-985, Ser-988, and Ser-996 each carry phosphoserine. The tract at residues 1054 to 1074 (KIRPKGPSQTLKVGEAPSRNC) is disordered. A Rho-GAP domain is found at 1349 to 1552 (AQFGKLMITS…TMIDQFPYLF (204 aa)).

With respect to regulation, negatively regulated by integrin, bsk and Src/Src64B. Its function is as follows. GTPase-activating protein (GAP) for RhoA/Rho1 that plays an essential role in the stability of dorsal branches of mushroom body (MB) neurons. The MB neurons are the center for olfactory learning and memory. Acts by converting RhoA/Rho1 to an inactive GDP-bound state, leading to repress the RhoA/Rho1-Drok-MRLC signaling pathway thereby maintaining axon branch stability. This is Rho GTPase-activating protein 190 (RhoGAPp190) from Drosophila melanogaster (Fruit fly).